The chain runs to 252 residues: Maintenance of carboxysome distribution protein A (252 aa).

ATP contacts are provided by G11, G12, G14, K15, T16, T17, Q41, E147, K151, F182, R183, L216, E217, and S218. T16 contacts Mg(2+).

The protein belongs to the ParA family. McdA subfamily. In terms of assembly, self-associates (probably a homodimer), interacts with McdB probably via the C-terminus of both proteins. Shows no signs of filament formation. Homodimerizes in the presence of ATP, making extra nucleotide contacts than with ADP or AMP-PNP. Each subunit binds 1 ATP molecule; Glu-147, Lys-151 and Arg-183 cross the dimer interface to contact ATP in the other subunit, while Phe-182, Arg-183 and Phe-221 stack with the adenine base in their own subunit.

It is found in the cytoplasm. Its subcellular location is the nucleoid. It carries out the reaction ATP + H2O = ADP + phosphate + H(+). Its function is as follows. McdA and McdB together mediate carboxysome (Cb) spacing, size, ultrastructure and probably inheritance in the cell. Together they prevent Cb aggregation. McdA is an ATPase that forms dynamic gradients on the nucleoid in response to adapter protein McdB, which associates with carboxysomes. The interplay between McdA gradients on the nucleoid and McdB-bound carboxysomes result in the equal spacing of Cbs along the cell length. Binds nucleoid DNA in an ATP-dependent manner; neither ADP nor ATP-gamma-S support DNA binding. Upon ATP-binding dimerizes and binds nucleoid DNA; the (McdA-ATP)2 dimer transiently binds McdB-bound Cbs. McdA's ATPase activity is stimulated 2-fold by DNA and McdB; ATP hydrolysis causes McdA release from DNA. Overexpression leads to loss of McdA oscillation, diffuse nucleoid staining by McdA with formation of large carboxysome aggregates that are in regions depleted of McdA; McdA remains nucleoid-associated. In terms of biological role, mutagenesis studies (characterized in vivo) suggest ATP binding, protein dimerization and a conformational change are necessary for nucleoid DNA-binding and binding to McdB-bound Cbs, which tethers Cbs to the nucleoid. Eventual McdB-stimulated ATP hydrolysis causes de-dimerization of McdA which no longer binds the nucleoid and releases McdB and Cbs. McdB-bound Cbs then move to a region of higher McdA concentration, distributing Cbs across the nucleoid. Incorrect positioning (aggregation) of carboxysomes results in reduced CO(2) fixation by encapsulated ribulose-1,5-bisphosphate carboxylase (RuBisCO, cbbL/cbbS), which leads to slower growth, cell elongation, asymmetric cell division and an increase in RuBisCO levels. The chain is Maintenance of carboxysome distribution protein A from Synechococcus elongatus (strain ATCC 33912 / PCC 7942 / FACHB-805) (Anacystis nidulans R2).